Here is a 205-residue protein sequence, read N- to C-terminus: Glycerol-3-phosphate acyltransferase (205 aa).

The next 5 membrane-spanning stretches (helical) occupy residues 4 to 24 (IAPG…AILV), 56 to 76 (VAVL…AYAL), 81 to 101 (FWLG…VFFG), 112 to 132 (FGAI…TWLL), and 138 to 158 (GYSS…VWWF).

This sequence belongs to the PlsY family. In terms of assembly, probably interacts with PlsX.

It is found in the cell inner membrane. It catalyses the reaction an acyl phosphate + sn-glycerol 3-phosphate = a 1-acyl-sn-glycero-3-phosphate + phosphate. It participates in lipid metabolism; phospholipid metabolism. Catalyzes the transfer of an acyl group from acyl-phosphate (acyl-PO(4)) to glycerol-3-phosphate (G3P) to form lysophosphatidic acid (LPA). This enzyme utilizes acyl-phosphate as fatty acyl donor, but not acyl-CoA or acyl-ACP. In Citrobacter koseri (strain ATCC BAA-895 / CDC 4225-83 / SGSC4696), this protein is Glycerol-3-phosphate acyltransferase.